A 243-amino-acid polypeptide reads, in one-letter code: Adenosine 5'-phosphosulfate reductase (243 aa).

[4Fe-4S] cluster is bound by residues C126, C127, C209, and C212. Residue C235 is the Nucleophile; cysteine thiosulfonate intermediate of the active site.

It belongs to the PAPS reductase family. CysH subfamily. The cofactor is [4Fe-4S] cluster.

The protein resides in the cytoplasm. The catalysed reaction is [thioredoxin]-disulfide + sulfite + AMP + 2 H(+) = adenosine 5'-phosphosulfate + [thioredoxin]-dithiol. Its pathway is sulfur metabolism; hydrogen sulfide biosynthesis; sulfite from sulfate. Catalyzes the formation of sulfite from adenosine 5'-phosphosulfate (APS) using thioredoxin as an electron donor. The polypeptide is Adenosine 5'-phosphosulfate reductase (Staphylococcus epidermidis (strain ATCC 12228 / FDA PCI 1200)).